Consider the following 524-residue polypeptide: Bifunctional purine biosynthesis protein PurH (524 aa).

Positions 1-144 (MTRRALVSVS…KNSAHVGVVV (144 aa)) constitute an MGS-like domain.

The protein belongs to the PurH family.

It catalyses the reaction (6R)-10-formyltetrahydrofolate + 5-amino-1-(5-phospho-beta-D-ribosyl)imidazole-4-carboxamide = 5-formamido-1-(5-phospho-D-ribosyl)imidazole-4-carboxamide + (6S)-5,6,7,8-tetrahydrofolate. It carries out the reaction IMP + H2O = 5-formamido-1-(5-phospho-D-ribosyl)imidazole-4-carboxamide. It participates in purine metabolism; IMP biosynthesis via de novo pathway; 5-formamido-1-(5-phospho-D-ribosyl)imidazole-4-carboxamide from 5-amino-1-(5-phospho-D-ribosyl)imidazole-4-carboxamide (10-formyl THF route): step 1/1. The protein operates within purine metabolism; IMP biosynthesis via de novo pathway; IMP from 5-formamido-1-(5-phospho-D-ribosyl)imidazole-4-carboxamide: step 1/1. This chain is Bifunctional purine biosynthesis protein PurH, found in Anaeromyxobacter sp. (strain K).